The chain runs to 124 residues: Large ribosomal subunit protein bL17 (124 aa).

Belongs to the bacterial ribosomal protein bL17 family. As to quaternary structure, part of the 50S ribosomal subunit. Contacts protein L32.

This Borrelia turicatae (strain 91E135) protein is Large ribosomal subunit protein bL17.